Reading from the N-terminus, the 250-residue chain is Glutathione transferase omega-1 (250 aa).

Residues 21–101 (SKGSFRVYNM…YLDDAFPETR (81 aa)) enclose the GST N-terminal domain. The Nucleophile role is filled by cysteine 33. Glutathione contacts are provided by residues lysine 60 and 85–86 (ES). Residues 106–234 (DPYEKVQQKL…TQSLEHGAAF (129 aa)) form the GST C-terminal domain.

The protein belongs to the GST superfamily. Omega family. In terms of assembly, homodimer. In terms of tissue distribution, expressed in the intestinal cells.

It localises to the cytoplasm. It carries out the reaction RX + glutathione = an S-substituted glutathione + a halide anion + H(+). It catalyses the reaction L-dehydroascorbate + 2 glutathione = glutathione disulfide + L-ascorbate. The catalysed reaction is methylarsonate + 2 glutathione + H(+) = methylarsonous acid + glutathione disulfide + H2O. In terms of biological role, exhibits glutathione-dependent thiol transferase activity. Has dehydroascorbate reductase activity and may contribute to the recycling of ascorbic acid. Participates in the biotransformation of inorganic arsenic and reduces monomethylarsonic acid (MMA). Protects against environmental stress and oxidative stress. This Caenorhabditis elegans protein is Glutathione transferase omega-1 (gsto-1).